Consider the following 364-residue polypeptide: MNQHTPAAALACAGLLGYCRAGFEKELAAELDDIAAEAGLIGYVRAEPDSGYVIYETFEPTPLGSFGESTDWRRPVFARQLLPWFARVDDLPERDRATPIVEAVKASGQRFSGVMLETPDTDEAKQRSGFCKRFTEPLAKALEKAGCLRSSRAGLPVLHVLFTSATTAWLAAGQPGQCSTWPMGIPRVRMPSNAPSRSTAKLSEAFMMLLEEGERDSILRAGQRAVDLGAAPGGWTWQLVNRGLRVTAIDNGPLRDSVMATEMVEHLKADGFTWRPHRPVDWMVCDMVEQPSRIASLMAEWVATGRCRYTIFNLKLPMKRRVEAVEQCRELIRKRLASVGPYDLRIKHLYHDREEVTAFLTLKR.

Residues Ser198, 231 to 234 (APGG), Asp250, Asp270, and Asp286 each bind S-adenosyl-L-methionine. Catalysis depends on Lys315, which acts as the Proton acceptor.

Belongs to the class I-like SAM-binding methyltransferase superfamily. RNA methyltransferase RlmE family. RlmM subfamily. As to quaternary structure, monomer.

Its subcellular location is the cytoplasm. It catalyses the reaction cytidine(2498) in 23S rRNA + S-adenosyl-L-methionine = 2'-O-methylcytidine(2498) in 23S rRNA + S-adenosyl-L-homocysteine + H(+). Catalyzes the 2'-O-methylation at nucleotide C2498 in 23S rRNA. The polypeptide is Ribosomal RNA large subunit methyltransferase M (Thauera aminoaromatica).